The following is a 293-amino-acid chain: ATP synthase subunit a (293 aa).

6 consecutive transmembrane segments (helical) span residues Asp-40 to Ala-60, Phe-98 to Leu-118, Asp-151 to Ile-171, Phe-188 to Ile-208, Met-225 to Phe-245, and Ala-264 to Val-284.

Belongs to the ATPase A chain family. As to quaternary structure, F-type ATPases have 2 components, CF(1) - the catalytic core - and CF(0) - the membrane proton channel. CF(1) has five subunits: alpha(3), beta(3), gamma(1), delta(1), epsilon(1). CF(0) has three main subunits: a(1), b(2) and c(9-12). The alpha and beta chains form an alternating ring which encloses part of the gamma chain. CF(1) is attached to CF(0) by a central stalk formed by the gamma and epsilon chains, while a peripheral stalk is formed by the delta and b chains.

It localises to the cell inner membrane. Its function is as follows. Key component of the proton channel; it plays a direct role in the translocation of protons across the membrane. The chain is ATP synthase subunit a from Bordetella avium (strain 197N).